A 243-amino-acid polypeptide reads, in one-letter code: Ubiquinone/menaquinone biosynthesis C-methyltransferase UbiE (243 aa).

Residues Thr-69, Asp-90, and 116–117 each bind S-adenosyl-L-methionine; that span reads DA.

The protein belongs to the class I-like SAM-binding methyltransferase superfamily. MenG/UbiE family.

The catalysed reaction is a 2-demethylmenaquinol + S-adenosyl-L-methionine = a menaquinol + S-adenosyl-L-homocysteine + H(+). The enzyme catalyses a 2-methoxy-6-(all-trans-polyprenyl)benzene-1,4-diol + S-adenosyl-L-methionine = a 5-methoxy-2-methyl-3-(all-trans-polyprenyl)benzene-1,4-diol + S-adenosyl-L-homocysteine + H(+). It functions in the pathway quinol/quinone metabolism; menaquinone biosynthesis; menaquinol from 1,4-dihydroxy-2-naphthoate: step 2/2. Its pathway is cofactor biosynthesis; ubiquinone biosynthesis. Functionally, methyltransferase required for the conversion of demethylmenaquinol (DMKH2) to menaquinol (MKH2) and the conversion of 2-polyprenyl-6-methoxy-1,4-benzoquinol (DDMQH2) to 2-polyprenyl-3-methyl-6-methoxy-1,4-benzoquinol (DMQH2). This Paraburkholderia xenovorans (strain LB400) protein is Ubiquinone/menaquinone biosynthesis C-methyltransferase UbiE.